The sequence spans 406 residues: Argininosuccinate synthase (406 aa).

ATP is bound by residues 11 to 19 (AYSGGLDTS) and Ala38. The L-citrulline site is built by Tyr91 and Ser96. Gly121 provides a ligand contact to ATP. L-aspartate is bound by residues Thr123, Asn127, and Asp128. Asn127 serves as a coordination point for L-citrulline. L-citrulline contacts are provided by Arg131, Ser181, Ser190, Glu266, and Tyr278.

This sequence belongs to the argininosuccinate synthase family. Type 1 subfamily. Homotetramer.

It localises to the cytoplasm. The enzyme catalyses L-citrulline + L-aspartate + ATP = 2-(N(omega)-L-arginino)succinate + AMP + diphosphate + H(+). The protein operates within amino-acid biosynthesis; L-arginine biosynthesis; L-arginine from L-ornithine and carbamoyl phosphate: step 2/3. This chain is Argininosuccinate synthase, found in Campylobacter jejuni subsp. jejuni serotype O:6 (strain 81116 / NCTC 11828).